Here is a 195-residue protein sequence, read N- to C-terminus: Shikimate kinase (195 aa).

30-35 contacts ATP; sequence GAGKTA. Mg(2+) is bound at residue Thr-34. Positions 52, 76, and 98 each coordinate substrate. Arg-136 is an ATP binding site. A substrate-binding site is contributed by Arg-155.

Belongs to the shikimate kinase family. In terms of assembly, monomer. Mg(2+) is required as a cofactor.

It is found in the cytoplasm. The enzyme catalyses shikimate + ATP = 3-phosphoshikimate + ADP + H(+). It functions in the pathway metabolic intermediate biosynthesis; chorismate biosynthesis; chorismate from D-erythrose 4-phosphate and phosphoenolpyruvate: step 5/7. Its function is as follows. Catalyzes the specific phosphorylation of the 3-hydroxyl group of shikimic acid using ATP as a cosubstrate. The polypeptide is Shikimate kinase (Ruegeria pomeroyi (strain ATCC 700808 / DSM 15171 / DSS-3) (Silicibacter pomeroyi)).